The sequence spans 243 residues: Cell surface glycoprotein CD200 receptor 1-B (243 aa).

Topologically, residues 1-29 are cytoplasmic; it reads MEISQQAGWCKKPASPMNTRAALEAVRNT. A helical; Signal-anchor for type II membrane protein membrane pass occupies residues 30–47; it reads AWTIVLLTSAAVMGASGI. Residues 47 to 146 form the Ig-like V-type domain; sequence ISRVSANLGH…GNFHYLYHLT (100 aa). Topologically, residues 48-243 are lumenal; that stretch reads SRVSANLGHS…LAQLPGGSAP (196 aa). 2 cysteine pairs are disulfide-bonded: Cys-62/Cys-130 and Cys-165/Cys-214. N-linked (GlcNAc...) asparagine glycosylation is found at Asn-64, Asn-67, Asn-127, Asn-193, Asn-222, and Asn-228. The Ig-like C2-type domain maps to 144-228; that stretch reads HLTVLVAPRM…ATLNETRSIN (85 aa).

The protein belongs to the CD200R family. In terms of tissue distribution, expressed in peripheral blood lymphocytes (PBL) and peripheral blood mononuclear cells (PBMC).

It is found in the membrane. This chain is Cell surface glycoprotein CD200 receptor 1-B (CD200R1B), found in Gallus gallus (Chicken).